The primary structure comprises 491 residues: F-box/LRR-repeat protein 7 (491 aa).

Positions 1-79 (MGANNGKQYG…GRGSSTSSSS (79 aa)) are disordered. Positions 16 to 26 (SSSVSSDVSSS) are enriched in low complexity. Residues 27–55 (TDHTPTKAQRNVATSEDSDLSMRTLSTPS) show a composition bias toward polar residues. The F-box domain occupies 111 to 157 (QASIDRLPDHSMVQIFSFLPTNQLCRCARVCRRWYNLAWDPRLWRTI). LRR repeat units lie at residues 185–210 (CLML…IAQC), 211–236 (CPEL…VVSL), 237–262 (CPNL…EASI), 271–296 (QISI…IAAH), 297–322 (CTQL…LVIY), 323–348 (CTSI…IAKL), 349–374 (ESRL…VAKY), 375–400 (CSKL…LAKN), 401–426 (CTKL…LALN), and 427–452 (CFNL…VAAN).

The protein belongs to the FBXL7 family. Part of the SCF (SKP1-CUL1-F-box) E3 ubiquitin-protein ligase complex SCF(FBXL7) composed of CUL1, SKP1, RBX1 and FBXL7. Interacts with AURKA; interaction takes place during mitosis but not in interphase. Interacts with BIRC5; this interaction allows BIRC5 to be polyubiquitinated by the SCF(FBXL7) E3 ubiquitin-protein ligase complex.

It is found in the cytoplasm. The protein localises to the cytoskeleton. The protein resides in the microtubule organizing center. It localises to the centrosome. It functions in the pathway protein modification; protein ubiquitination. Substrate recognition component of a SCF (SKP1-CUL1-F-box protein) E3 ubiquitin-protein ligase complex. During mitosis, it mediates the ubiquitination and subsequent proteasomal degradation of AURKA, causing mitotic arrest. It also regulates mitochondrial function by mediating the ubiquitination and proteasomal degradation of the apoptosis inhibitor BIRC5. The polypeptide is F-box/LRR-repeat protein 7 (Fbxl7) (Mus musculus (Mouse)).